Consider the following 656-residue polypeptide: Acyl-CoA-binding domain-containing protein 6 (656 aa).

One can recognise an ACB domain in the interval 8-102; that stretch reads YPDRFYAAAA…LEEEDPGWYS (95 aa). Residues 44–48 and K70 contribute to the an acyl-CoA site; that span reads YGLYQ. Residues 129 to 148 are disordered; sequence ASTNGTSVPEPKTISENGSS. Kelch repeat units follow at residues 194 to 241, 254 to 304, 305 to 354, 356 to 405, 406 to 454, and 461 to 507; these read KMYI…AQVS, KFFS…LVGT, TLVL…CHAD, YLLI…TVGE, NWYI…LVHS, and YLIS…EPEV. Residues 527–636 are a coiled coil; sequence LKKDDANELL…EQAALEAKQR (110 aa). The segment at 627–656 is disordered; sequence EQAALEAKQRQSSSGMWGWLVGTPPDKSES.

This sequence belongs to the ACBP family. In terms of tissue distribution, highly expressed in leaves. Expressed in roots and seeds.

It localises to the peroxisome. In terms of biological role, binds medium- and long-chain acyl-CoA esters with high affinity. Can interact in vitro with linoleoyl-CoA and linolenoyl-CoA. Binds phosphatidic acid (PA) and phosphatidylcholine (PC) in vitro. May play a role in the biosynthesis of phospholipids. May be involved in lipid degradation via peroxisomal beta-oxydation. The chain is Acyl-CoA-binding domain-containing protein 6 from Oryza sativa subsp. japonica (Rice).